The following is a 132-amino-acid chain: MMNGENMDKQTVIGFVVLFCVLELVFYLKKLYQSMALTLAVFGIFSLLFFLLYIPVLSKKAVPYVINYFKPPHQRVREIKVGSDETTDNSIIRLKEKAKTLHPDEGNRISGRSSNSFKDSASCIITIVDDSN.

2 consecutive transmembrane segments (helical) span residues 12-32 (VIGFVVLFCVLELVFYLKKLY) and 37-57 (LTLAVFGIFSLLFFLLYIPVL).

It localises to the cell membrane. This is an uncharacterized protein from Methanocaldococcus jannaschii (strain ATCC 43067 / DSM 2661 / JAL-1 / JCM 10045 / NBRC 100440) (Methanococcus jannaschii).